The chain runs to 437 residues: Phosphomethylpyrimidine synthase (437 aa).

Substrate is bound by residues Asn69, Met98, Tyr127, His163, 185-187 (SRG), 226-229 (DACR), and Glu265. A Zn(2+)-binding site is contributed by His269. Substrate is bound at residue Tyr292. His333 serves as a coordination point for Zn(2+). Residues Cys409, Cys412, and Cys416 each contribute to the [4Fe-4S] cluster site.

The protein belongs to the ThiC family. The cofactor is [4Fe-4S] cluster.

It catalyses the reaction 5-amino-1-(5-phospho-beta-D-ribosyl)imidazole + S-adenosyl-L-methionine = 4-amino-2-methyl-5-(phosphooxymethyl)pyrimidine + CO + 5'-deoxyadenosine + formate + L-methionine + 3 H(+). It participates in cofactor biosynthesis; thiamine diphosphate biosynthesis. Its function is as follows. Catalyzes the synthesis of the hydroxymethylpyrimidine phosphate (HMP-P) moiety of thiamine from aminoimidazole ribotide (AIR) in a radical S-adenosyl-L-methionine (SAM)-dependent reaction. This chain is Phosphomethylpyrimidine synthase, found in Clostridium novyi (strain NT).